Reading from the N-terminus, the 1020-residue chain is UPF0182 protein jk1603 (1020 aa).

Residues 1–18 (MSTPTPPSSGRPKQPFPS) show a composition bias toward pro residues. Positions 1–23 (MSTPTPPSSGRPKQPFPSSPGSS) are disordered. 7 consecutive transmembrane segments (helical) span residues 28-48 (ILGI…VVVS), 73-93 (LVLF…AAFL), 125-145 (FLVG…QSNW), 175-195 (LPFL…AFVI), 227-247 (LAVI…FDRY), 272-292 (QIVL…TIVL), and 300-320 (LAVA…PAML). Residues 924 to 998 (QEIDGSVVDP…KVNKTRESGT (75 aa)) are disordered. Composition is skewed to basic and acidic residues over residues 942–961 (KGDK…EQSS) and 969–998 (KSDD…ESGT).

The protein belongs to the UPF0182 family.

It localises to the cell membrane. This chain is UPF0182 protein jk1603, found in Corynebacterium jeikeium (strain K411).